A 323-amino-acid chain; its full sequence is Beta-ketoacyl-[acyl-carrier-protein] synthase III (323 aa).

Residues Cys114 and His250 contribute to the active site. The ACP-binding stretch occupies residues 251–255; sequence QANLR. Asn280 is an active-site residue.

It belongs to the thiolase-like superfamily. FabH family. In terms of assembly, homodimer.

It localises to the cytoplasm. The catalysed reaction is malonyl-[ACP] + acetyl-CoA + H(+) = 3-oxobutanoyl-[ACP] + CO2 + CoA. Its pathway is lipid metabolism; fatty acid biosynthesis. Functionally, catalyzes the condensation reaction of fatty acid synthesis by the addition to an acyl acceptor of two carbons from malonyl-ACP. Catalyzes the first condensation reaction which initiates fatty acid synthesis and may therefore play a role in governing the total rate of fatty acid production. Possesses both acetoacetyl-ACP synthase and acetyl transacylase activities. Its substrate specificity determines the biosynthesis of branched-chain and/or straight-chain of fatty acids. This Cereibacter sphaeroides (strain ATCC 17029 / ATH 2.4.9) (Rhodobacter sphaeroides) protein is Beta-ketoacyl-[acyl-carrier-protein] synthase III.